The primary structure comprises 421 residues: UDP-N-acetylglucosamine 1-carboxyvinyltransferase (421 aa).

Residue 23-24 participates in phosphoenolpyruvate binding; it reads KN. Arg92 lines the UDP-N-acetyl-alpha-D-glucosamine pocket. Cys116 functions as the Proton donor in the catalytic mechanism. Cys116 bears the 2-(S-cysteinyl)pyruvic acid O-phosphothioketal mark. UDP-N-acetyl-alpha-D-glucosamine is bound by residues 121–125, 161–164, Asp306, and Ile328; these read RPVDL and KVSV.

This sequence belongs to the EPSP synthase family. MurA subfamily.

It localises to the cytoplasm. The catalysed reaction is phosphoenolpyruvate + UDP-N-acetyl-alpha-D-glucosamine = UDP-N-acetyl-3-O-(1-carboxyvinyl)-alpha-D-glucosamine + phosphate. It functions in the pathway cell wall biogenesis; peptidoglycan biosynthesis. Its function is as follows. Cell wall formation. Adds enolpyruvyl to UDP-N-acetylglucosamine. This is UDP-N-acetylglucosamine 1-carboxyvinyltransferase from Vibrio vulnificus (strain CMCP6).